The chain runs to 177 residues: NADH-quinone oxidoreductase subunit B (177 aa).

The [4Fe-4S] cluster site is built by Cys56, Cys57, Cys121, and Cys151.

This sequence belongs to the complex I 20 kDa subunit family. NDH-1 is composed of 14 different subunits. Subunits NuoB, C, D, E, F, and G constitute the peripheral sector of the complex. It depends on [4Fe-4S] cluster as a cofactor.

The protein localises to the cell inner membrane. The catalysed reaction is a quinone + NADH + 5 H(+)(in) = a quinol + NAD(+) + 4 H(+)(out). Its function is as follows. NDH-1 shuttles electrons from NADH, via FMN and iron-sulfur (Fe-S) centers, to quinones in the respiratory chain. Couples the redox reaction to proton translocation (for every two electrons transferred, four hydrogen ions are translocated across the cytoplasmic membrane), and thus conserves the redox energy in a proton gradient. This Ruegeria pomeroyi (strain ATCC 700808 / DSM 15171 / DSS-3) (Silicibacter pomeroyi) protein is NADH-quinone oxidoreductase subunit B.